A 329-amino-acid chain; its full sequence is Oxidoreductase sirO (329 aa).

Asp-54 provides a ligand contact to NADP(+). Tyr-59 acts as the Proton donor in catalysis. His-118 contacts substrate. NADP(+)-binding positions include 148–149, Gln-174, 203–213, and 288–296; these read SN, SPLCCGLLINA, and SSARQLEES.

Belongs to the aldo/keto reductase family. Aldo/keto reductase 2 subfamily.

Its pathway is mycotoxin biosynthesis. In terms of biological role, oxidoreductase; part of the gene cluster that mediates the biosynthesis of sirodesmin PL, an epipolythiodioxopiperazine (ETP) characterized by a disulfide bridged cyclic dipeptide and that acts as a phytotoxin which is involved in the blackleg didease of canola. SirD catalyzes the O-prenylation of L-tyrosine (L-Tyr) in the presence of dimethylallyl diphosphate (DMAPP) to yield 4-O-dimethylallyl-L-Tyr, and therefore represents probably the first pathway-specific enzyme in the biosynthesis of sirodesmin PL. 4-O-dimethylallyl-L-Tyr, then undergoes condensation with L-Ser in a reaction catalyzed by the non-ribosomal peptide synthase sirP to form the diketopiperazine (DKP) backbone. Further bishydroxylation of the DKP performed by the cytochrome P450 monooxygenase sirC leads to the production of the intermediate phomamide. This step is essential to form the reactive thiol group required for toxicity of sirodesmin PL. The next steps of sirodesmin biosynthesis are not well understood yet, but some predictions could be made from intermediate compounds identification. Phomamide is converted into phomalizarine via oxidation, probably by sirT. Further oxidation, methylation (by sirM or sirN) and reduction steps convert phomalizarine to deacetyl sirodesmin. Finally, acetyltransferase sirH probably acetylates deacetyl sirodesmin to produce sirodesmin PL. The chain is Oxidoreductase sirO from Leptosphaeria maculans (Blackleg fungus).